A 265-amino-acid chain; its full sequence is 5'-nucleotidase SurE (265 aa).

A divalent metal cation is bound by residues Asp8, Asp9, Ser39, and Asn96.

The protein belongs to the SurE nucleotidase family. It depends on a divalent metal cation as a cofactor.

It is found in the cytoplasm. It carries out the reaction a ribonucleoside 5'-phosphate + H2O = a ribonucleoside + phosphate. Functionally, nucleotidase that shows phosphatase activity on nucleoside 5'-monophosphates. The polypeptide is 5'-nucleotidase SurE (Dehalococcoides mccartyi (strain ATCC BAA-2266 / KCTC 15142 / 195) (Dehalococcoides ethenogenes (strain 195))).